A 531-amino-acid chain; its full sequence is Peptide chain release factor 3 (531 aa).

In terms of domain architecture, tr-type G spans 13–282; that stretch reads AKRRTFAIIS…TLIEHAPPPK (270 aa). GTP-binding positions include 22-29, 90-94, and 144-147; these read SHPDAGKT, DTPGH, and NKLD.

The protein belongs to the TRAFAC class translation factor GTPase superfamily. Classic translation factor GTPase family. PrfC subfamily.

The protein resides in the cytoplasm. Increases the formation of ribosomal termination complexes and stimulates activities of RF-1 and RF-2. It binds guanine nucleotides and has strong preference for UGA stop codons. It may interact directly with the ribosome. The stimulation of RF-1 and RF-2 is significantly reduced by GTP and GDP, but not by GMP. The polypeptide is Peptide chain release factor 3 (Psychrobacter sp. (strain PRwf-1)).